Reading from the N-terminus, the 398-residue chain is Phosphoglycerate kinase (398 aa).

Substrate-binding positions include 23-25, arginine 38, 61-64, arginine 122, and arginine 155; these read DFN and HMGK. Residues lysine 206, glycine 297, glutamate 328, and 354–357 contribute to the ATP site; that span reads GGDS.

This sequence belongs to the phosphoglycerate kinase family. Monomer.

It is found in the cytoplasm. The catalysed reaction is (2R)-3-phosphoglycerate + ATP = (2R)-3-phospho-glyceroyl phosphate + ADP. It participates in carbohydrate degradation; glycolysis; pyruvate from D-glyceraldehyde 3-phosphate: step 2/5. This is Phosphoglycerate kinase from Clostridium botulinum (strain Hall / ATCC 3502 / NCTC 13319 / Type A).